Consider the following 297-residue polypeptide: Golgi-associated RAB2 interactor protein 1A (297 aa).

The tract at residues 226–257 is disordered; that stretch reads SNRHQTSRDRHTDTATETDNSGNCKSTPLVAS. A compositionally biased stretch (polar residues) spans 240–257; that stretch reads ATETDNSGNCKSTPLVAS.

It belongs to the GARIN family. Interacts (via N-terminus) with RAB2B (in GTP-bound form). Expressed in testis (at protein level).

The protein localises to the golgi apparatus. Functionally, RAB2B effector protein required for accurate acrosome formation and normal male fertility. This is Golgi-associated RAB2 interactor protein 1A from Mus musculus (Mouse).